The chain runs to 58 residues: Small ribosomal subunit protein bS21 (58 aa).

Residues 24–58 (TKAGTLQEARKREHYEKPSVKRKRKSEAARKRKKI) are disordered. Positions 31 to 42 (EARKREHYEKPS) are enriched in basic and acidic residues. Positions 43 to 58 (VKRKRKSEAARKRKKI) are enriched in basic residues.

It belongs to the bacterial ribosomal protein bS21 family.

The protein is Small ribosomal subunit protein bS21 of Streptococcus thermophilus (strain CNRZ 1066).